The primary structure comprises 197 residues: Ribosome maturation factor RimP (197 aa).

The protein belongs to the RimP family.

It localises to the cytoplasm. In terms of biological role, required for maturation of 30S ribosomal subunits. This Acidovorax ebreus (strain TPSY) (Diaphorobacter sp. (strain TPSY)) protein is Ribosome maturation factor RimP.